The following is a 385-amino-acid chain: MKVLVLGAGLMGKEAARDLVQSQDVEAVTLADVDLAKAEQTVRQLHSKKLAAVRVDAGDPQQLAAAMKGHDVVVNALFYQFNETVAKTAIETGVHSVDLGGHIGHITDRVLELHERAQAAGVTIIPDLGVAPGMINILSGYGASQLDEVESILLYVGGIPVRPEPPLEYNHVFSLEGLLDHYTDPALIIRNGQKQEVPSLSEVEPIYFDRFGPLEAFHTSGGTSTLSRSFPNLKRLEYKTIRYRGHAEKCKLLVDLTLTRHDVEVEINGCRVKPRDVLLSVLKPLLDLKGKDDVVLLRVIVGGRKDGKETVLEYETVTFNDRENKVTAMARTTAYTISAVAQLIGRGVITKRGVYPPEQIVPGDVYMDEMKKRGVLISEKRTVHS.

Belongs to the saccharopine dehydrogenase family. In terms of assembly, homohexamer.

The enzyme catalyses L-lysine + NAD(+) = L-1-piperideine-6-carboxylate + NH4(+) + NADH + 2 H(+). Its function is as follows. Catalyzes the oxidative deamination of L-lysine in the presence of NAD. Can also use (S)-(2-aminoethyl)-L-cysteine as a substrate, but more slowly. Can use both NAD and NADP but the preferred substrate is NAD. This Geobacillus stearothermophilus (Bacillus stearothermophilus) protein is Lysine 6-dehydrogenase (lysDH).